Reading from the N-terminus, the 157-residue chain is Transcription elongation factor GreA (157 aa).

It belongs to the GreA/GreB family.

Its function is as follows. Necessary for efficient RNA polymerase transcription elongation past template-encoded arresting sites. The arresting sites in DNA have the property of trapping a certain fraction of elongating RNA polymerases that pass through, resulting in locked ternary complexes. Cleavage of the nascent transcript by cleavage factors such as GreA or GreB allows the resumption of elongation from the new 3'terminus. GreA releases sequences of 2 to 3 nucleotides. The sequence is that of Transcription elongation factor GreA from Brucella anthropi (strain ATCC 49188 / DSM 6882 / CCUG 24695 / JCM 21032 / LMG 3331 / NBRC 15819 / NCTC 12168 / Alc 37) (Ochrobactrum anthropi).